The sequence spans 53 residues: ATP synthase protein 8 (53 aa).

Residues 6-26 (PIGWLSLFIIFSLTFILFSMM) traverse the membrane as a helical segment.

The protein belongs to the ATPase protein 8 family. As to quaternary structure, F-type ATPases have 2 components, CF(1) - the catalytic core - and CF(0) - the membrane proton channel.

Its subcellular location is the mitochondrion membrane. In terms of biological role, mitochondrial membrane ATP synthase (F(1)F(0) ATP synthase or Complex V) produces ATP from ADP in the presence of a proton gradient across the membrane which is generated by electron transport complexes of the respiratory chain. F-type ATPases consist of two structural domains, F(1) - containing the extramembraneous catalytic core and F(0) - containing the membrane proton channel, linked together by a central stalk and a peripheral stalk. During catalysis, ATP synthesis in the catalytic domain of F(1) is coupled via a rotary mechanism of the central stalk subunits to proton translocation. Part of the complex F(0) domain. Minor subunit located with subunit a in the membrane. The chain is ATP synthase protein 8 (mt:ATPase8) from Ceratitis capitata (Mediterranean fruit fly).